The following is a 345-amino-acid chain: tRNA-specific 2-thiouridylase MnmA (345 aa).

ATP contacts are provided by residues 6–13 (LMSGGVDS) and Leu-32. Cys-92 functions as the Nucleophile in the catalytic mechanism. Residues Cys-92 and Cys-191 are joined by a disulfide bond. Residue Gly-116 participates in ATP binding. The segment at 138-140 (KDQ) is interaction with tRNA. Cys-191 serves as the catalytic Cysteine persulfide intermediate. The tract at residues 293–294 (RY) is interaction with tRNA.

This sequence belongs to the MnmA/TRMU family.

It is found in the cytoplasm. The catalysed reaction is S-sulfanyl-L-cysteinyl-[protein] + uridine(34) in tRNA + AH2 + ATP = 2-thiouridine(34) in tRNA + L-cysteinyl-[protein] + A + AMP + diphosphate + H(+). Catalyzes the 2-thiolation of uridine at the wobble position (U34) of tRNA, leading to the formation of s(2)U34. This is tRNA-specific 2-thiouridylase MnmA from Helicobacter hepaticus (strain ATCC 51449 / 3B1).